We begin with the raw amino-acid sequence, 449 residues long: Elongation factor 1-alpha (449 aa).

Residues 5-230 (KVHMNLVVVG…DMLEPPVRPS (226 aa)) enclose the tr-type G domain. Residues 14–21 (GHVDAGKS) are G1. Residue 14 to 21 (GHVDAGKS) participates in GTP binding. The tract at residues 70-74 (GITID) is G2. The interval 91-94 (DAPG) is G3. GTP contacts are provided by residues 91–95 (DAPGH) and 153–156 (NKMD). Residues 153 to 156 (NKMD) form a G4 region. Residues 194–196 (SGW) form a G5 region. The residue at position 362 (Glu362) is a 5-glutamyl glycerylphosphorylethanolamine.

Belongs to the TRAFAC class translation factor GTPase superfamily. Classic translation factor GTPase family. EF-Tu/EF-1A subfamily. Post-translationally, phosphatidylethanolamine (PE) is a direct precursor of the ethanolamine-phosphoglycerol (EPG) moiety.

The protein resides in the cytoplasm. In terms of biological role, this protein promotes the GTP-dependent binding of aminoacyl-tRNA to the A-site of ribosomes during protein biosynthesis. This chain is Elongation factor 1-alpha (TEF1), found in Trypanosoma brucei brucei.